We begin with the raw amino-acid sequence, 329 residues long: Mas-related G-protein coupled receptor member X2 (329 aa).

Residues 1 to 33 are Extracellular-facing; that stretch reads MDPTTPAWGTESTTMNGNDQALPLFCGKETLIS. A helical membrane pass occupies residues 34–54; it reads VFLILFIALVGLVGNGFVLWL. Residues 55-63 are Cytoplasmic-facing; it reads LGFRMRKNA. Residues 64–84 traverse the membrane as a helical segment; it reads FSVYVLSLAGADFLFLCFQII. Residues 85-96 lie on the Extracellular side of the membrane; the sequence is NCLVYLSNVFCS. Residues 97–117 form a helical membrane-spanning segment; the sequence is ISINFPSFFITVMTCAYLAGL. Residues 118 to 144 lie on the Cytoplasmic side of the membrane; that stretch reads SMLSTISTERCLSVLWPIWYRCRRPRH. Residues 145–165 form a helical membrane-spanning segment; it reads LSAVACVLLWALSLLLSILEG. Residues 166–183 are Extracellular-facing; that stretch reads KFCGLFGDGDSGWCQTFD. Residues 184-204 form a helical membrane-spanning segment; the sequence is LITAAWLIFLFMVLCGSSLAL. The Cytoplasmic portion of the chain corresponds to 205-227; that stretch reads LVRILCGSRGLPLTRLYLTILLT. The helical transmembrane segment at 228 to 248 threads the bilayer; that stretch reads VLVFLLCGLPFGIQWFLILWI. Residues 249-263 are Extracellular-facing; that stretch reads WKNSDVLFCHIHPVS. The helical transmembrane segment at 264–284 threads the bilayer; it reads VVLSSLNSSANPIIYFFVGSF. Residues 285-329 are Cytoplasmic-facing; that stretch reads RKQWRLQQPILKLALQRALQDIAEVDHSEGCFRQGTPEMSRSSLV.

This sequence belongs to the G-protein coupled receptor 1 family. Mas subfamily.

It is found in the cell membrane. Mast cell-specific receptor for basic secretagogues, i.e. cationic amphiphilic drugs, as well as endo- or exogenous peptides, consisting of a basic head group and a hydrophobic core. Recognizes and binds small molecules containing a cyclized tetrahydroisoquinoline (THIQ), such as non-steroidal neuromuscular blocking drugs (NMBDs), including tubocurarine and atracurium. In response to these compounds, mediates pseudo-allergic reactions characterized by histamine release, inflammation and airway contraction. The polypeptide is Mas-related G-protein coupled receptor member X2 (MRGPRX2) (Pan troglodytes (Chimpanzee)).